The following is a 1005-amino-acid chain: DNA-directed RNA polymerase subunit beta (1005 aa).

The protein belongs to the RNA polymerase beta chain family. In plastids the minimal PEP RNA polymerase catalytic core is composed of four subunits: alpha, beta, beta', and beta''. When a (nuclear-encoded) sigma factor is associated with the core the holoenzyme is formed, which can initiate transcription (Potential).

The protein resides in the plastid. It localises to the apicoplast. The catalysed reaction is RNA(n) + a ribonucleoside 5'-triphosphate = RNA(n+1) + diphosphate. In terms of biological role, DNA-dependent RNA polymerase catalyzes the transcription of DNA into RNA using the four ribonucleoside triphosphates as substrates. In Theileria parva (East coast fever infection agent), this protein is DNA-directed RNA polymerase subunit beta (rpoB).